The chain runs to 444 residues: Spermatogenesis-associated protein 1 (444 aa).

A coiled-coil region spans residues 268–403 (SLLKIEREKI…RKLDTDKMKL (136 aa)).

In terms of assembly, interacts with IFT20. In terms of tissue distribution, highly abundant in the testis, and is also expressed in the heart and kidney (at protein level).

The protein resides in the cytoplasmic vesicle. The protein localises to the secretory vesicle. Its subcellular location is the acrosome. This chain is Spermatogenesis-associated protein 1 (Spata1), found in Mus musculus (Mouse).